Reading from the N-terminus, the 141-residue chain is Hemoglobin subunit alpha (141 aa).

The Globin domain occupies 1 to 141 (VLSSADKTNI…VSTVLTSKYR (141 aa)). Ser-3 is subject to Phosphoserine. N6-succinyllysine is present on Lys-7. Thr-8 is subject to Phosphothreonine. N6-succinyllysine is present on Lys-11. At Lys-16 the chain carries N6-acetyllysine; alternate. Lys-16 is subject to N6-succinyllysine; alternate. Position 24 is a phosphotyrosine (Tyr-24). Ser-35 bears the Phosphoserine mark. Position 40 is an N6-succinyllysine (Lys-40). Ser-49 is subject to Phosphoserine. An O2-binding site is contributed by His-58. His-87 contacts heme b. Ser-102 is modified (phosphoserine). Position 108 is a phosphothreonine (Thr-108). Residues Ser-124 and Ser-131 each carry the phosphoserine modification. 2 positions are modified to phosphothreonine: Thr-134 and Thr-137. Ser-138 bears the Phosphoserine mark.

The protein belongs to the globin family. As to quaternary structure, heterotetramer of two alpha chains and two beta chains. As to expression, red blood cells.

In terms of biological role, involved in oxygen transport from the lung to the various peripheral tissues. Hemopressin acts as an antagonist peptide of the cannabinoid receptor CNR1. Hemopressin-binding efficiently blocks cannabinoid receptor CNR1 and subsequent signaling. This Rousettus aegyptiacus (Egyptian fruit bat) protein is Hemoglobin subunit alpha (HBA).